A 235-amino-acid chain; its full sequence is Secretory carrier-associated membrane protein 5 (235 aa).

Topologically, residues 1 to 39 (MAEKVNNFPPLPKFIPLKPCFYQDFEADIPPQHLSLTKR) are cytoplasmic. The helical transmembrane segment at 40–60 (LYYLWMLNSVTLAVNLVGCLA) threads the bilayer. Over 61 to 67 (WLIGGGG) the chain is Extracellular. A helical membrane pass occupies residues 68–88 (ATNFGLAFLWLILFTPCSYVC). The Cytoplasmic segment spans residues 89–102 (WFRPIYKAFKTDSS). Residues 103 to 125 (FSFMAFFFTFMAQLVISIIQAVG) traverse the membrane as a helical segment. Topologically, residues 126 to 148 (IPGWGVCGWIATISFFGTNIGSA) are extracellular. The chain crosses the membrane as a helical span at residues 149–169 (VVMLIPTVMFTVVAVFSFIAL). The Cytoplasmic portion of the chain corresponds to 170-235 (SMVHKFYRGS…TPNYTYSNEM (66 aa)).

This sequence belongs to the SCAMP family. SCAMP5 subfamily. In terms of assembly, interacts (via C-terminal part) with SYT1 and SYT2; interaction with synaptotagmins making a link with the SNARE molecules. Interacts with SLC9A7. In terms of tissue distribution, brain-specific.

It localises to the cell membrane. The protein resides in the golgi apparatus membrane. It is found in the golgi apparatus. The protein localises to the trans-Golgi network membrane. Its subcellular location is the recycling endosome membrane. It localises to the cytoplasmic vesicle. The protein resides in the secretory vesicle. It is found in the synaptic vesicle membrane. In terms of biological role, required for the calcium-dependent exocytosis of signal sequence-containing cytokines such as CCL5. Probably acts in cooperation with the SNARE machinery. This chain is Secretory carrier-associated membrane protein 5 (Scamp5), found in Mus musculus (Mouse).